We begin with the raw amino-acid sequence, 317 residues long: Ribosomal RNA small subunit methyltransferase H (317 aa).

Residues 36-38 (GGH), aspartate 56, phenylalanine 80, aspartate 102, and glutamine 109 contribute to the S-adenosyl-L-methionine site.

This sequence belongs to the methyltransferase superfamily. RsmH family.

The protein localises to the cytoplasm. The catalysed reaction is cytidine(1402) in 16S rRNA + S-adenosyl-L-methionine = N(4)-methylcytidine(1402) in 16S rRNA + S-adenosyl-L-homocysteine + H(+). Its function is as follows. Specifically methylates the N4 position of cytidine in position 1402 (C1402) of 16S rRNA. The protein is Ribosomal RNA small subunit methyltransferase H of Baumannia cicadellinicola subsp. Homalodisca coagulata.